Here is a 776-residue protein sequence, read N- to C-terminus: DNA ligase (776 aa).

Residues 31 to 35 (DAEYD), 80 to 81 (SL), and Glu112 contribute to the NAD(+) site. The active-site N6-AMP-lysine intermediate is Lys114. NAD(+) is bound by residues Arg135, Glu172, Lys288, and Lys312. 4 residues coordinate Zn(2+): Cys406, Cys409, Cys436, and Cys442. The 84-residue stretch at 693–776 (AEGLPLAGQT…TFLAEQGIAV (84 aa)) folds into the BRCT domain.

This sequence belongs to the NAD-dependent DNA ligase family. LigA subfamily. Mg(2+) is required as a cofactor. It depends on Mn(2+) as a cofactor.

The catalysed reaction is NAD(+) + (deoxyribonucleotide)n-3'-hydroxyl + 5'-phospho-(deoxyribonucleotide)m = (deoxyribonucleotide)n+m + AMP + beta-nicotinamide D-nucleotide.. Functionally, DNA ligase that catalyzes the formation of phosphodiester linkages between 5'-phosphoryl and 3'-hydroxyl groups in double-stranded DNA using NAD as a coenzyme and as the energy source for the reaction. It is essential for DNA replication and repair of damaged DNA. In Pseudomonas putida (strain ATCC 700007 / DSM 6899 / JCM 31910 / BCRC 17059 / LMG 24140 / F1), this protein is DNA ligase.